A 66-amino-acid polypeptide reads, in one-letter code: Large ribosomal subunit protein uL29 (66 aa).

Belongs to the universal ribosomal protein uL29 family.

The protein is Large ribosomal subunit protein uL29 of Chelativorans sp. (strain BNC1).